Reading from the N-terminus, the 683-residue chain is Cyclic nucleotide-gated channel alpha-1 (683 aa).

Residues Met-1–Leu-160 are Cytoplasmic-facing. Positions Ala-34–Lys-144 are disordered. Residues Ser-105–Lys-144 are compositionally biased toward basic and acidic residues. A helical membrane pass occupies residues Phe-161–Glu-182. Topologically, residues Leu-183–Leu-192 are extracellular. The helical transmembrane segment at Ile-193–Gly-213 threads the bilayer. Residues Tyr-214–Lys-238 are Cytoplasmic-facing. Residues Leu-239 to Asn-257 form a helical membrane-spanning segment. Over Tyr-258–Arg-262 the chain is Extracellular. A helical membrane pass occupies residues Leu-263 to Thr-281. Topologically, residues Arg-282–Ile-288 are cytoplasmic. An ion conduction pathway region spans residues Pro-286–Met-394. Residues Phe-289–Ile-312 form a helical membrane-spanning segment. The Extracellular portion of the chain corresponds to Ser-313–Arg-335. N-linked (GlcNAc...) asparagine glycosylation is present at Asn-320. The next 2 helical transmembrane spans lie at Leu-336–Val-370 and Val-371–Asn-395. A selectivity filter region spans residues Thr-353–Glu-356. Residues Ala-396–Ala-472 are C-linker. The Cytoplasmic segment spans residues Ala-396–Gly-683. A cyclic nucleotide-binding domain region spans residues Ala-476–Lys-596. Residues Gly-536, Ser-539, Arg-552, and Thr-553 each contribute to the 3',5'-cyclic GMP site. Residues Arg-552 and Thr-553 each contribute to the 3',5'-cyclic AMP site. The stretch at Leu-614–Leu-668 forms a coiled coil.

It belongs to the cyclic nucleotide-gated cation channel (TC 1.A.1.5) family. CNGA1 subfamily. In terms of assembly, forms heterotetrameric channels composed of CNGA1 and CNGB1 subunits with 3:1 stoichiometry. May also form cyclic nucleotide-activated homotetrameric channels, that are efficiently activated by saturating cGMP, but poorly activated by saturating cAMP compared to the heterotetramer with CNGB1. The channel binds Ca(2+)-bound CALM1 via CaM1 and CaM2 regions of the CNGB1 subunit; this interaction modulates the affinity of the channel for cNMPs in response to intracellular Ca(2+) levels. As to expression, rod cells in the retina.

It is found in the cell membrane. The enzyme catalyses Ca(2+)(in) = Ca(2+)(out). The catalysed reaction is Na(+)(in) = Na(+)(out). It catalyses the reaction K(+)(in) = K(+)(out). It carries out the reaction NH4(+)(in) = NH4(+)(out). The enzyme catalyses Rb(+)(in) = Rb(+)(out). The catalysed reaction is Li(+)(in) = Li(+)(out). It catalyses the reaction Cs(+)(in) = Cs(+)(out). Its function is as follows. Pore-forming subunit of the rod cyclic nucleotide-gated channel. Mediates rod photoresponses at dim light converting transient changes in intracellular cGMP levels into electrical signals. In the dark, cGMP levels are high and keep the channel open enabling a steady inward current carried by Na(+) and Ca(2+) ions that leads to membrane depolarization and neurotransmitter release from synaptic terminals. Upon photon absorption cGMP levels decline leading to channel closure and membrane hyperpolarization that ultimately slows neurotransmitter release and signals the presence of light, the end point of the phototransduction cascade. Conducts cGMP- and cAMP-gated ion currents, with permeability for monovalent and divalent cations. The selectivity for Ca(2+) over Na(+) increases with cGMP concentrations, whereas the selectivity among monovalent ions is independent of the cGMP levels. The chain is Cyclic nucleotide-gated channel alpha-1 from Rattus norvegicus (Rat).